The following is a 72-amino-acid chain: UPF0352 protein Shal_2512 (72 aa).

The protein belongs to the UPF0352 family.

This is UPF0352 protein Shal_2512 from Shewanella halifaxensis (strain HAW-EB4).